A 322-amino-acid chain; its full sequence is Cytochrome c biogenesis protein CcsA (322 aa).

8 consecutive transmembrane segments (helical) span residues 15–35, 45–65, 72–92, 98–120, 144–164, 226–246, 253–273, and 287–307; these read FSIV…VDGI, GMIV…TYSG, LYES…VPYF, YLST…GLLT, MILG…LLVI, GISL…VWAN, WNWD…AIYL, and AIVA…VNLL.

This sequence belongs to the CcmF/CycK/Ccl1/NrfE/CcsA family. In terms of assembly, may interact with Ccs1.

It is found in the plastid. The protein localises to the chloroplast thylakoid membrane. Functionally, required during biogenesis of c-type cytochromes (cytochrome c6 and cytochrome f) at the step of heme attachment. The polypeptide is Cytochrome c biogenesis protein CcsA (Coffea arabica (Arabian coffee)).